The following is a 464-amino-acid chain: Soluble pyridine nucleotide transhydrogenase (464 aa).

35–44 contributes to the FAD binding site; that stretch reads DSRRVVGGNC.

It belongs to the class-I pyridine nucleotide-disulfide oxidoreductase family. It depends on FAD as a cofactor.

It localises to the cytoplasm. The enzyme catalyses NAD(+) + NADPH = NADH + NADP(+). Its function is as follows. Conversion of NADPH, generated by peripheral catabolic pathways, to NADH, which can enter the respiratory chain for energy generation. The chain is Soluble pyridine nucleotide transhydrogenase from Pseudomonas aeruginosa (strain LESB58).